Reading from the N-terminus, the 508-residue chain is Metalloprotease TIKI1 (508 aa).

The N-terminal stretch at 1–23 (MVIIWNIFLPAFLLVLAKASLRS) is a signal peptide. Topologically, residues 24–485 (SRDSANCKLN…KYIKAAQSVS (462 aa)) are extracellular. N219, N228, N277, and N335 each carry an N-linked (GlcNAc...) asparagine glycan. Residues 486–506 (FSLSIPSAFLLLAWCFQQVAV) traverse the membrane as a helical segment. The Cytoplasmic portion of the chain corresponds to 507–508 (LQ).

This sequence belongs to the TIKI family. It depends on Mn(2+) as a cofactor. Co(2+) serves as cofactor. As to expression, zygotically expressed in the Spemann-Mangold organizer, in particular in the head Spemann-Mangold organizer region responsible for anterior patterning.

It localises to the cell membrane. Its function is as follows. Metalloprotease that acts as a negative regulator of the Wnt signaling pathway: expressed in the Spemann-Mangold organizer and is required for anterior-neural patterning in head formation in embryos. Acts by mediating the cleavage of the N-terminal residues of a subset of Wnt proteins. Following cleavage, Wnt proteins become oxidized and form large disulfide-bond oligomers, leading to their inactivation. Able to cleave wnt8. The protein is Metalloprotease TIKI1 (trabd2a) of Xenopus tropicalis (Western clawed frog).